A 288-amino-acid polypeptide reads, in one-letter code: Phenazine biosynthesis-like domain-containing protein 2 (288 aa).

Glu46 is an active-site residue.

This sequence belongs to the PhzF family.

The chain is Phenazine biosynthesis-like domain-containing protein 2 (Pbld2) from Mus musculus (Mouse).